Reading from the N-terminus, the 211-residue chain is Ribosomal RNA small subunit methyltransferase G (211 aa).

Residues Gly78, Met83, 129–130 (AE), and Arg144 each bind S-adenosyl-L-methionine.

Belongs to the methyltransferase superfamily. RNA methyltransferase RsmG family.

The protein resides in the cytoplasm. The enzyme catalyses guanosine(527) in 16S rRNA + S-adenosyl-L-methionine = N(7)-methylguanosine(527) in 16S rRNA + S-adenosyl-L-homocysteine. In terms of biological role, specifically methylates the N7 position of guanine in position 527 of 16S rRNA. This Pseudomonas syringae pv. tomato (strain ATCC BAA-871 / DC3000) protein is Ribosomal RNA small subunit methyltransferase G.